A 78-amino-acid chain; its full sequence is Small ribosomal subunit protein bS18 (78 aa).

This sequence belongs to the bacterial ribosomal protein bS18 family. In terms of assembly, part of the 30S ribosomal subunit. Forms a tight heterodimer with protein bS6.

In terms of biological role, binds as a heterodimer with protein bS6 to the central domain of the 16S rRNA, where it helps stabilize the platform of the 30S subunit. This chain is Small ribosomal subunit protein bS18, found in Lactobacillus acidophilus (strain ATCC 700396 / NCK56 / N2 / NCFM).